Here is a 400-residue protein sequence, read N- to C-terminus: Putative C-type lectin domain family 20 member A (400 aa).

Residues 1–20 form the signal peptide; the sequence is MLPRALLLSFCAAALQLVSS. C-type lectin domains lie at 26–131 and 159–275; these read LVKE…FLCY and ISGQ…FFCF. 4 disulfide bridges follow: Cys-40/Cys-130, Cys-105/Cys-122, Cys-180/Cys-274, and Cys-248/Cys-266. The segment at 287–346 is disordered; sequence ELPPLFHTSPTEMTEETTPRPGRAVASVGSGTDRRDTAAATEAQHLSSESKEKTSAQKSG.

This is Putative C-type lectin domain family 20 member A from Homo sapiens (Human).